We begin with the raw amino-acid sequence, 440 residues long: Rhamnogalacturonase A (440 aa).

The first 18 residues, 1–18 (MRALFLLALGSIPALVSG), serve as a signal peptide directing secretion. The cysteines at positions 39 and 65 are disulfide-linked. Asn-50 carries N-linked (GlcNAc...) asparagine glycosylation. Asp-215 acts as the Proton donor in catalysis. An intrachain disulfide couples Cys-217 to Cys-234. The active site involves His-290. N-linked (GlcNAc...) asparagine glycosylation is present at Asn-317. 2 disulfide bridges follow: Cys-340-Cys-346 and Cys-368-Cys-377. The O-linked (Man) threonine glycan is linked to Thr-385. Residue Ser-386 is glycosylated (O-linked (Man) serine). O-linked (Man) threonine glycosylation is found at Thr-388, Thr-389, and Thr-390. Ser-391 carries an O-linked (Man) serine glycan. O-linked (Man) threonine glycosylation is found at Thr-392 and Thr-394. Ser-398 and Ser-401 each carry an O-linked (Man) serine glycan. Residues Thr-403, Thr-404, and Thr-416 are each glycosylated (O-linked (Man) threonine). Ser-418 carries O-linked (Man) serine glycosylation. Thr-423 and Thr-426 each carry an O-linked (Man) threonine glycan. Residues Ser-427 and Ser-436 are each glycosylated (O-linked (Man) serine).

The protein belongs to the glycosyl hydrolase 28 family. Post-translationally, the N-terminus is blocked. N-glycosylated and may also be O-glycosylated.

It is found in the secreted. The enzyme catalyses Endohydrolysis of alpha-D-GalA-(1-&gt;2)-alpha-L-Rha glycosidic bond in the rhamnogalacturonan I backbone with initial inversion of anomeric configuration releasing oligosaccharides with beta-D-GalA at the reducing end.. Pectinolytic enzymes consist of four classes of enzymes: pectine lyase, polygalacturonase, pectin methylesterase and rhamnogalacturonase. Has a positive effect in the apple hot-mash liquefaction process. Hydrolyzes alpha-D-galacturonopyranosyl-(1,2)-alpha-L-rhamnopyranosyl linkages in the backbone of the hairy regions of pectins. This is Rhamnogalacturonase A (rhgA) from Aspergillus aculeatus.